A 131-amino-acid polypeptide reads, in one-letter code: Arsenate reductase 1 (131 aa).

Residues Cys10, Cys82, and Cys89 each act as nucleophile in the active site. 2 disulfide bridges follow: Cys10/Cys82 and Cys82/Cys89.

It belongs to the low molecular weight phosphotyrosine protein phosphatase family. Thioredoxin-coupled ArsC subfamily.

It is found in the cytoplasm. The catalysed reaction is arsenate + [thioredoxin]-dithiol + H(+) = arsenite + [thioredoxin]-disulfide + H2O. Catalyzes the reduction of arsenate [As(V)] to arsenite [As(III)]. In Staphylococcus saprophyticus subsp. saprophyticus (strain ATCC 15305 / DSM 20229 / NCIMB 8711 / NCTC 7292 / S-41), this protein is Arsenate reductase 1.